The following is a 64-amino-acid chain: Defensin-like protein 123 (64 aa).

Disulfide bonds link Cys19–Cys62, Cys29–Cys49, Cys34–Cys56, and Cys38–Cys58.

It belongs to the DEFL family.

The protein is Defensin-like protein 123 of Arabidopsis thaliana (Mouse-ear cress).